Reading from the N-terminus, the 1394-residue chain is DNA-directed RNA polymerase subunit beta' (1394 aa).

Zn(2+)-binding residues include cysteine 71, cysteine 73, cysteine 86, and cysteine 89. Residues aspartate 462, aspartate 464, and aspartate 466 each contribute to the Mg(2+) site. Zn(2+)-binding residues include cysteine 810, cysteine 883, cysteine 890, and cysteine 893.

This sequence belongs to the RNA polymerase beta' chain family. As to quaternary structure, the RNAP catalytic core consists of 2 alpha, 1 beta, 1 beta' and 1 omega subunit. When a sigma factor is associated with the core the holoenzyme is formed, which can initiate transcription. The cofactor is Mg(2+). It depends on Zn(2+) as a cofactor.

It carries out the reaction RNA(n) + a ribonucleoside 5'-triphosphate = RNA(n+1) + diphosphate. Functionally, DNA-dependent RNA polymerase catalyzes the transcription of DNA into RNA using the four ribonucleoside triphosphates as substrates. The protein is DNA-directed RNA polymerase subunit beta' of Beijerinckia indica subsp. indica (strain ATCC 9039 / DSM 1715 / NCIMB 8712).